A 760-amino-acid polypeptide reads, in one-letter code: Probable ubiquitin carboxyl-terminal hydrolase creB (760 aa).

Residues 1–28 (MGSFLRSFRNNAGSTTPSVGAVPAKKEV) are disordered. A compositionally biased stretch (polar residues) spans 8 to 18 (FRNNAGSTTPS). The region spanning 55–469 (YGMENYGNTC…CAYVLFYQET (415 aa)) is the USP domain. Cys64 (nucleophile) is an active-site residue. Disordered stretches follow at residues 114-146 (AEAQAEKQRAANAQRPGMPPAQPQKPEDKDSPD) and 242-270 (PAAIEKSLPAPDHAETVDQSASSGSKTPN). A compositionally biased stretch (polar residues) spans 258–270 (VDQSASSGSKTPN). The active-site Proton acceptor is the His420. Residues 520–760 (EEHNRPNGLK…LRKKSFSILS (241 aa)) form a disordered region. A coiled-coil region spans residues 575 to 635 (KSDVQGKKER…AALEASKASK (61 aa)). Composition is skewed to basic and acidic residues over residues 578–626 (VQGK…ELKA), 635–651 (KAQEDRRQSPDHGKDKL), and 708–742 (DPKDDPFQDSHHPNKPMMKEDEQANHKDPKHERTG). Over residues 743–760 (HGKWRSFSLRKKSFSILS) the composition is skewed to basic residues.

Belongs to the peptidase C19 family. As to quaternary structure, interacts with creA, creC and qutD.

It catalyses the reaction Thiol-dependent hydrolysis of ester, thioester, amide, peptide and isopeptide bonds formed by the C-terminal Gly of ubiquitin (a 76-residue protein attached to proteins as an intracellular targeting signal).. Functionally, ubiquitin thioesterase component of the regulatory network controlling carbon source utilization through ubiquitination and deubiquitination involving creA, creB, creC, creD and acrB. Deubiquitinates the creA catabolic repressor and the quinate permease qutD. Also plays a role in response to carbon starvation and the control of extracellular proteases activity. The chain is Probable ubiquitin carboxyl-terminal hydrolase creB (creB) from Aspergillus clavatus (strain ATCC 1007 / CBS 513.65 / DSM 816 / NCTC 3887 / NRRL 1 / QM 1276 / 107).